Here is a 778-residue protein sequence, read N- to C-terminus: MKFYIDDLPVLFPYPKIYPEQYNYMCDIKKTLDVGGNSILEMPSGTGKTVSLLSLTIAYQMHYPEHRKIIYCSRTMSEIEKALVELENLMDYRTKELGYQEDFRGLGLTSRKNLCLHPEVSKERKGTVVDEKCRRMTNGQAKRKLEEDPEANVELCEYHENLYNIEVEDYLPKGVFSFEKLLKYCEEKTLCPYFIVRRMISLCNIIIYSYHYLLDPKIAERVSNEVSKDSIVIFDEAHNIDNVCIESLSLDLTTDALRRATRGANALDERISEVRKVDSQKLQDEYEKLVQGLHSADILTDQEEPFVETPVLPQDLLTEAIPGNIRRAEHFVSFLKRLIEYLKTRMKVLHVISETPKSFLQHLKQLTFIERKPLRFCSERLSLLVRTLEVTEVEDFTALKDIATFATLISTYEEGFLLIIEPYEIENAAVPNPIMRFTCLDASIAIKPVFERFSSVIITSGTISPLDMYPRMLNFKTVLQKSYAMTLAKKSFLPMIITKGSDQVAISSRFEIRNDPSIVRNYGSMLVEFAKITPDGMVVFFPSYLYMESIVSMWQTMGILDEVWKHKLILVETPDAQETSLALETYRKACSNGRGAILLSVARGKVSEGIDFDHQYGRTVLMIGIPFQYTESRILKARLEFMRENYRIRENDFLSFDAMRHAAQCLGRVLRGKDDYGVMVLADRRFSRKRSQLPKWIAQGLSDADLNLSTDMAISNTKQFLRTMAQPTDPKDQEGVSVWSYEDLIKHQNSRKDQGGFIENENKEGEQDEDEDEDIEMQ.

Residues 7 to 285 form the Helicase ATP-binding domain; the sequence is DLPVLFPYPK…KVDSQKLQDE (279 aa). An ATP-binding site is contributed by 42–49; sequence MPSGTGKT. The [4Fe-4S] cluster site is built by Cys-115, Cys-133, Cys-156, and Cys-191. Residues 235–238 carry the DEAH box motif; the sequence is DEAH. The segment covering 750-765 has biased composition (basic and acidic residues); sequence SRKDQGGFIENENKEG. The tract at residues 750-778 is disordered; the sequence is SRKDQGGFIENENKEGEQDEDEDEDIEMQ. Positions 766-778 are enriched in acidic residues; it reads EQDEDEDEDIEMQ.

This sequence belongs to the helicase family. RAD3/XPD subfamily. Component of the 7-subunit TFIIH core complex composed of XPB/SSL2, XPD/RAD3, SSL1, TFB1, TFB2, TFB4 and TFB5, which is active in NER. The core complex associates with the 3-subunit CTD-kinase module TFIIK composed of CCL1, KIN28 and TFB3 to form the 10-subunit holoenzyme (holo-TFIIH) active in transcription. An additionnal subunit, TFB6, plays a role in the dissociation of the SSL2 helicase from TFIIH after transcription initiation. It depends on [4Fe-4S] cluster as a cofactor. Mg(2+) is required as a cofactor.

Its subcellular location is the nucleus. It catalyses the reaction Couples ATP hydrolysis with the unwinding of duplex DNA at the replication fork by translocating in the 5'-3' direction. This creates two antiparallel DNA single strands (ssDNA). The leading ssDNA polymer is the template for DNA polymerase III holoenzyme which synthesizes a continuous strand.. The catalysed reaction is ATP + H2O = ADP + phosphate + H(+). In terms of biological role, ATP-dependent 5'-3' DNA helicase. Component of the general transcription and DNA repair factor IIH (TFIIH) core complex, which is involved in general and transcription-coupled nucleotide excision repair (NER) of damaged DNA and, when complexed to TFIIK, in RNA transcription by RNA polymerase II. In NER, TFIIH acts by opening DNA around the lesion to allow the excision of the damaged oligonucleotide and its replacement by a new DNA fragment. The ATP-dependent helicase activity of XPD/RAD3 is required for DNA opening. In transcription, TFIIH has an essential role in transcription initiation. When the pre-initiation complex (PIC) has been established, TFIIH is required for promoter opening and promoter escape. Phosphorylation of the C-terminal tail (CTD) of the largest subunit of RNA polymerase II by the kinase module TFIIK controls the initiation of transcription. XPD/RAD3 acts by forming a bridge between TFIIK and the core-TFIIH complex. Involved in the maintenance of the fidelity of DNA replication. Has single-stranded DNA-dependent ATPase activity. 5'-3' DNA helicase activity requires ATP (dATP partially substitutes), will unwind over 800 bp dsDNA. Able to unwind an RNA:DNA hybrid. This chain is General transcription and DNA repair factor IIH helicase subunit XPD/RAD3, found in Saccharomyces cerevisiae (strain ATCC 204508 / S288c) (Baker's yeast).